The chain runs to 466 residues: Cysteine--tRNA ligase (466 aa).

Residue cysteine 27 coordinates Zn(2+). The 'HIGH' region motif lies at proline 29–asparagine 39. Zn(2+) contacts are provided by cysteine 207, histidine 232, and glutamate 236. The 'KMSKS' region signature appears at lysine 264–serine 268. Position 267 (lysine 267) interacts with ATP.

It belongs to the class-I aminoacyl-tRNA synthetase family. Monomer. The cofactor is Zn(2+).

It is found in the cytoplasm. It catalyses the reaction tRNA(Cys) + L-cysteine + ATP = L-cysteinyl-tRNA(Cys) + AMP + diphosphate. This is Cysteine--tRNA ligase from Clostridium novyi (strain NT).